The chain runs to 516 residues: 2,3-bisphosphoglycerate-independent phosphoglycerate mutase (516 aa).

Residues aspartate 13 and serine 63 each coordinate Mn(2+). The active-site Phosphoserine intermediate is the serine 63. Residues histidine 124, 154–155 (RD), arginine 186, arginine 192, 262–265 (RPDR), and lysine 337 contribute to the substrate site. Positions 404, 408, 445, 446, and 464 each coordinate Mn(2+).

This sequence belongs to the BPG-independent phosphoglycerate mutase family. As to quaternary structure, monomer. Mn(2+) is required as a cofactor.

The enzyme catalyses (2R)-2-phosphoglycerate = (2R)-3-phosphoglycerate. It functions in the pathway carbohydrate degradation; glycolysis; pyruvate from D-glyceraldehyde 3-phosphate: step 3/5. In terms of biological role, catalyzes the interconversion of 2-phosphoglycerate and 3-phosphoglycerate. In Cellvibrio japonicus (strain Ueda107) (Pseudomonas fluorescens subsp. cellulosa), this protein is 2,3-bisphosphoglycerate-independent phosphoglycerate mutase.